Reading from the N-terminus, the 267-residue chain is 2-dehydro-3-deoxyphosphooctonate aldolase (267 aa).

This sequence belongs to the KdsA family.

It is found in the cytoplasm. The catalysed reaction is D-arabinose 5-phosphate + phosphoenolpyruvate + H2O = 3-deoxy-alpha-D-manno-2-octulosonate-8-phosphate + phosphate. It functions in the pathway carbohydrate biosynthesis; 3-deoxy-D-manno-octulosonate biosynthesis; 3-deoxy-D-manno-octulosonate from D-ribulose 5-phosphate: step 2/3. The protein operates within bacterial outer membrane biogenesis; lipopolysaccharide biosynthesis. This chain is 2-dehydro-3-deoxyphosphooctonate aldolase, found in Campylobacter jejuni subsp. doylei (strain ATCC BAA-1458 / RM4099 / 269.97).